A 317-amino-acid polypeptide reads, in one-letter code: Tenomodulin (317 aa).

The Cytoplasmic segment spans residues 1 to 30 (MAKNPPENCEGCHILNAEALKSKKIRKSLK). The chain crosses the membrane as a helical; Signal-anchor for type II membrane protein span at residues 31–50 (ICGLVFGILALTLIVLFWGS). Over 51 to 317 (KHFWPEVSKK…WWVARMLGRV (267 aa)) the chain is Extracellular. The 94-residue stretch at 93 to 186 (GNGTDETLEV…ICDNVTMYWI (94 aa)) folds into the BRICHOS domain. N-linked (GlcNAc...) asparagine glycosylation is present at Asn-94. An intrachain disulfide couples Cys-120 to Cys-178. Asn-180 is a glycosylation site (N-linked (GlcNAc...) asparagine). Phosphoserine is present on Ser-239.

It belongs to the chondromodulin-1 family. As to expression, highly expressed in tendons.

The protein resides in the membrane. It is found in the nucleus envelope. Functionally, may be an angiogenesis inhibitor. The chain is Tenomodulin (Tnmd) from Rattus norvegicus (Rat).